A 610-amino-acid polypeptide reads, in one-letter code: UvrABC system protein C (610 aa).

The 79-residue stretch at 16–94 (SQPGVYRMYD…IKLYQPRYNV (79 aa)) folds into the GIY-YIG domain. The region spanning 204 to 239 (QQVLHQLIERMENASKALNFEEAARIRDQIQAVRRV) is the UVR domain.

It belongs to the UvrC family. Interacts with UvrB in an incision complex.

It is found in the cytoplasm. Its function is as follows. The UvrABC repair system catalyzes the recognition and processing of DNA lesions. UvrC both incises the 5' and 3' sides of the lesion. The N-terminal half is responsible for the 3' incision and the C-terminal half is responsible for the 5' incision. In Serratia proteamaculans (strain 568), this protein is UvrABC system protein C.